The chain runs to 122 residues: Large ribosomal subunit protein uL18 (122 aa).

It belongs to the universal ribosomal protein uL18 family. Part of the 50S ribosomal subunit; part of the 5S rRNA/L5/L18/L25 subcomplex. Contacts the 5S and 23S rRNAs.

This is one of the proteins that bind and probably mediate the attachment of the 5S RNA into the large ribosomal subunit, where it forms part of the central protuberance. The chain is Large ribosomal subunit protein uL18 from Thermosipho africanus (strain TCF52B).